We begin with the raw amino-acid sequence, 616 residues long: Homeodomain-interacting protein kinase 4 (616 aa).

The Protein kinase domain occupies 11–347; that stretch reads YDIIEVLGKG…PSAALRHPFV (337 aa). ATP-binding positions include 17 to 25 and K40; that span reads LGKGTFGEV. The active-site Proton acceptor is D136. The tract at residues 486–616 is disordered; that stretch reads HKARKPPAGS…SFLQHVTGHH (131 aa). Over residues 496–511 the composition is skewed to polar residues; it reads KSDSNFSNLIRLSQVS. Residue S511 is modified to Phosphoserine.

Belongs to the protein kinase superfamily. CMGC Ser/Thr protein kinase family. HIPK subfamily. In terms of processing, autophosphorylated.

Its subcellular location is the cytoplasm. It catalyses the reaction L-seryl-[protein] + ATP = O-phospho-L-seryl-[protein] + ADP + H(+). The catalysed reaction is L-threonyl-[protein] + ATP = O-phospho-L-threonyl-[protein] + ADP + H(+). Protein kinase that phosphorylates human TP53 at Ser-9, and thus induces TP53 repression of BIRC5 promoter. May act as a corepressor of transcription factors (Potential). The chain is Homeodomain-interacting protein kinase 4 (HIPK4) from Homo sapiens (Human).